The following is a 206-amino-acid chain: Cytochrome c biogenesis ATP-binding export protein CcmA (206 aa).

The ABC transporter domain maps to 2-206 (LEARDVVCIR…IQLTPSEGTP (205 aa)). Residue 34–41 (GANGVGKT) coordinates ATP.

This sequence belongs to the ABC transporter superfamily. CcmA exporter (TC 3.A.1.107) family. The complex is composed of two ATP-binding proteins (CcmA) and two transmembrane proteins (CcmB).

The protein localises to the cell inner membrane. The enzyme catalyses heme b(in) + ATP + H2O = heme b(out) + ADP + phosphate + H(+). Part of the ABC transporter complex CcmAB involved in the biogenesis of c-type cytochromes; once thought to export heme, this seems not to be the case, but its exact role is uncertain. Responsible for energy coupling to the transport system. The polypeptide is Cytochrome c biogenesis ATP-binding export protein CcmA (Pectobacterium atrosepticum (strain SCRI 1043 / ATCC BAA-672) (Erwinia carotovora subsp. atroseptica)).